Here is a 298-residue protein sequence, read N- to C-terminus: N-acetylmuramic acid 6-phosphate etherase (298 aa).

Positions 55–218 (IHAQVSGGGR…STGLMIKSGK (164 aa)) constitute an SIS domain. The active-site Proton donor is Glu83. Residue Glu114 is part of the active site.

It belongs to the GCKR-like family. MurNAc-6-P etherase subfamily. Homodimer.

It catalyses the reaction N-acetyl-D-muramate 6-phosphate + H2O = N-acetyl-D-glucosamine 6-phosphate + (R)-lactate. It participates in amino-sugar metabolism; 1,6-anhydro-N-acetylmuramate degradation. It functions in the pathway amino-sugar metabolism; N-acetylmuramate degradation. The protein operates within cell wall biogenesis; peptidoglycan recycling. Its function is as follows. Specifically catalyzes the cleavage of the D-lactyl ether substituent of MurNAc 6-phosphate, producing GlcNAc 6-phosphate and D-lactate. Together with AnmK, is also required for the utilization of anhydro-N-acetylmuramic acid (anhMurNAc) either imported from the medium or derived from its own cell wall murein, and thus plays a role in cell wall recycling. In Shigella flexneri, this protein is N-acetylmuramic acid 6-phosphate etherase.